The sequence spans 128 residues: Dehydrin Xero 1 (128 aa).

A compositionally biased stretch (polar residues) spans 1-19 (MESYQNQSGAQQTHQQLDQ). The segment at 1-128 (MESYQNQSGA…IKEKLPGGHH (128 aa)) is disordered. Composition is skewed to low complexity over residues 23–41 (PFPA…PAVA) and 48–60 (GMLH…SSSS). A compositionally biased stretch (basic and acidic residues) spans 75-91 (GITEKIKEKLPGHHDSN). Residues 92-104 (KTSSLGSTTTAYD) show a composition bias toward polar residues. The span at 107-128 (TVHHEKKGMMEKIKEKLPGGHH) shows a compositional bias: basic and acidic residues.

Belongs to the plant dehydrin family.

In Arabidopsis thaliana (Mouse-ear cress), this protein is Dehydrin Xero 1 (XERO1).